The following is a 409-amino-acid chain: N-carbamoyl-L-amino acid amidohydrolase (409 aa).

4 residues coordinate a divalent metal cation: His-79, Asp-90, Glu-125, and His-189. Residues Gln-192, His-225, Asn-273, Arg-286, and Ala-355 each coordinate an N-carbamoyl-L-alpha-amino acid. The interval 208 to 325 (GIAGLIWVKF…TTERLQEMAP (118 aa)) is involved in dimerization. His-380 serves as a coordination point for a divalent metal cation.

It belongs to the peptidase M20 family. Homodimer. Mn(2+) is required as a cofactor. Requires Ni(2+) as cofactor. It depends on Co(2+) as a cofactor. The cofactor is Fe(2+).

It carries out the reaction an N-carbamoyl-L-alpha-amino acid + H2O + 2 H(+) = an L-alpha-amino acid + NH4(+) + CO2. The enzyme catalyses N-carbamoyl-L-methionine + H2O + 2 H(+) = L-methionine + NH4(+) + CO2. It catalyses the reaction N-acetyl-L-methionine + H2O = L-methionine + acetate. The catalysed reaction is N-carbamoyl-L-alanine + H2O + 2 H(+) = L-alanine + NH4(+) + CO2. It carries out the reaction N-carbamoyl-L-glutamate + H2O + 2 H(+) = L-glutamate + NH4(+) + CO2. The enzyme catalyses N-carbamoylglycine + H2O + 2 H(+) = glycine + NH4(+) + CO2. It catalyses the reaction N-carbamoyl-L-leucine + H2O + 2 H(+) = L-leucine + NH4(+) + CO2. Functionally, catalyzes the hydrolysis of aliphatic N-carbamoyl-L-alpha-amino acids to free L-alpha-amino acids. Is strictly L-specific since it is inactive toward N-carbamoyl-D-alpha-amino acids. Is not able to use aromatic N-carbamoyl-L-alpha-amino acids like N-carbamoyl-L-tryptophan and N-carbamoyl-L-phenylalanine as substrates, but is also able to hydrolyze N-acetyl-L-methionine. This is N-carbamoyl-L-amino acid amidohydrolase from Geobacillus stearothermophilus (Bacillus stearothermophilus).